The primary structure comprises 604 residues: Elongation factor 4 (604 aa).

The tr-type G domain occupies 4-186 (EFIRNFSIIA…AIVHLVPPPK (183 aa)). GTP is bound by residues 16–21 (DHGKST) and 133–136 (NKID).

This sequence belongs to the TRAFAC class translation factor GTPase superfamily. Classic translation factor GTPase family. LepA subfamily.

The protein resides in the cell inner membrane. It catalyses the reaction GTP + H2O = GDP + phosphate + H(+). Functionally, required for accurate and efficient protein synthesis under certain stress conditions. May act as a fidelity factor of the translation reaction, by catalyzing a one-codon backward translocation of tRNAs on improperly translocated ribosomes. Back-translocation proceeds from a post-translocation (POST) complex to a pre-translocation (PRE) complex, thus giving elongation factor G a second chance to translocate the tRNAs correctly. Binds to ribosomes in a GTP-dependent manner. The protein is Elongation factor 4 of Solibacter usitatus (strain Ellin6076).